The chain runs to 414 residues: Sensor protein CutS (414 aa).

Residues 1–15 (MATTPAPPGAPPKPT) show a composition bias toward pro residues. The disordered stretch occupies residues 1 to 21 (MATTPAPPGAPPKPTWDPRSA). The next 2 helical transmembrane spans lie at 37-57 (LLYGGMFLIAGILLLSIIYLL) and 121-141 (SLLALLGLAVIAFAFGYAMAG). The region spanning 142–194 (RVLSPLGRITRTARAVAGSDLSRRIELDGPDDELKELADTFDDMLERLQRAFT) is the HAMP domain. Residues 202–414 (NASHELRTPL…GLVMRVTLPV (213 aa)) enclose the Histidine kinase domain. H205 bears the Phosphohistidine; by autocatalysis mark.

The protein resides in the cell membrane. The catalysed reaction is ATP + protein L-histidine = ADP + protein N-phospho-L-histidine.. Its function is as follows. Member of the two-component regulatory system CutS/CutR, involved in the regulation of copper metabolism. The polypeptide is Sensor protein CutS (cutS) (Streptomyces coelicolor (strain ATCC BAA-471 / A3(2) / M145)).